The sequence spans 1405 residues: DNA-directed RNA polymerase subunit beta' (1405 aa).

Residues C71, C73, C86, and C89 each coordinate Zn(2+). Mg(2+)-binding residues include D462, D464, and D466. Zn(2+) is bound by residues C820, C893, C900, and C903.

This sequence belongs to the RNA polymerase beta' chain family. In terms of assembly, the RNAP catalytic core consists of 2 alpha, 1 beta, 1 beta' and 1 omega subunit. When a sigma factor is associated with the core the holoenzyme is formed, which can initiate transcription. Mg(2+) serves as cofactor. It depends on Zn(2+) as a cofactor.

The enzyme catalyses RNA(n) + a ribonucleoside 5'-triphosphate = RNA(n+1) + diphosphate. Its function is as follows. DNA-dependent RNA polymerase catalyzes the transcription of DNA into RNA using the four ribonucleoside triphosphates as substrates. In Methylorubrum extorquens (strain CM4 / NCIMB 13688) (Methylobacterium extorquens), this protein is DNA-directed RNA polymerase subunit beta'.